The following is a 340-amino-acid chain: Ketol-acid reductoisomerase (NADP(+)) (340 aa).

The region spanning 1-182 is the KARI N-terminal Rossmann domain; that stretch reads MRVYYDRDCD…GGGRSGIIET (182 aa). Residues 24–27, Arg48, Ser51, Ser53, and 83–86 contribute to the NADP(+) site; these read YGSQ and DELQ. Residue His108 is part of the active site. Gly134 contacts NADP(+). The 147-residue stretch at 183-329 folds into the KARI C-terminal knotted domain; the sequence is NFREECETDL…ETLRGMMPWI (147 aa). Residues Asp191, Glu195, Glu227, and Glu231 each coordinate Mg(2+). Ser252 provides a ligand contact to substrate.

This sequence belongs to the ketol-acid reductoisomerase family. It depends on Mg(2+) as a cofactor.

It carries out the reaction (2R)-2,3-dihydroxy-3-methylbutanoate + NADP(+) = (2S)-2-acetolactate + NADPH + H(+). The catalysed reaction is (2R,3R)-2,3-dihydroxy-3-methylpentanoate + NADP(+) = (S)-2-ethyl-2-hydroxy-3-oxobutanoate + NADPH + H(+). It participates in amino-acid biosynthesis; L-isoleucine biosynthesis; L-isoleucine from 2-oxobutanoate: step 2/4. It functions in the pathway amino-acid biosynthesis; L-valine biosynthesis; L-valine from pyruvate: step 2/4. In terms of biological role, involved in the biosynthesis of branched-chain amino acids (BCAA). Catalyzes an alkyl-migration followed by a ketol-acid reduction of (S)-2-acetolactate (S2AL) to yield (R)-2,3-dihydroxy-isovalerate. In the isomerase reaction, S2AL is rearranged via a Mg-dependent methyl migration to produce 3-hydroxy-3-methyl-2-ketobutyrate (HMKB). In the reductase reaction, this 2-ketoacid undergoes a metal-dependent reduction by NADPH to yield (R)-2,3-dihydroxy-isovalerate. The protein is Ketol-acid reductoisomerase (NADP(+)) of Jannaschia sp. (strain CCS1).